The chain runs to 109 residues: Putative double-stranded DNA mimic protein Ent638_2296 (109 aa).

This sequence belongs to the putative dsDNA mimic protein family.

May act as a double-stranded DNA (dsDNA) mimic. Probably regulates the activity of a dsDNA-binding protein. In Enterobacter sp. (strain 638), this protein is Putative double-stranded DNA mimic protein Ent638_2296.